We begin with the raw amino-acid sequence, 405 residues long: 2,3-diketo-5-methylthiopentyl-1-phosphate enolase (405 aa).

Lys-91 acts as the Proton acceptor in catalysis. Residues Lys-140, 166–169, His-257, Gly-329, and 351–352 each bind substrate; these read KDDE and GG. The Mg(2+) site is built by Lys-166, Asp-168, and Glu-169. The residue at position 166 (Lys-166) is an N6-carboxylysine.

This sequence belongs to the RuBisCO large chain family. Type IV subfamily. In terms of assembly, homodimer. Mg(2+) is required as a cofactor.

The enzyme catalyses 5-methylsulfanyl-2,3-dioxopentyl phosphate = 2-hydroxy-5-methylsulfanyl-3-oxopent-1-enyl phosphate. The protein operates within amino-acid biosynthesis; L-methionine biosynthesis via salvage pathway; L-methionine from S-methyl-5-thio-alpha-D-ribose 1-phosphate: step 3/6. Its function is as follows. Catalyzes the enolization of 2,3-diketo-5-methylthiopentyl-1-phosphate (DK-MTP-1-P) into 2-hydroxy-3-keto-5-methylthiopentenyl-1-phosphate (HK-MTPenyl-1-P). The sequence is that of 2,3-diketo-5-methylthiopentyl-1-phosphate enolase from Bacillus licheniformis (strain ATCC 14580 / DSM 13 / JCM 2505 / CCUG 7422 / NBRC 12200 / NCIMB 9375 / NCTC 10341 / NRRL NRS-1264 / Gibson 46).